Reading from the N-terminus, the 805-residue chain is Leucine--tRNA ligase (805 aa).

The 'HIGH' region signature appears at 40 to 51; it reads PYPSGSGLHVGH. The short motif at 576-580 is the 'KMSKS' region element; that stretch reads KMSKS. Position 579 (Lys-579) interacts with ATP.

This sequence belongs to the class-I aminoacyl-tRNA synthetase family.

It is found in the cytoplasm. It carries out the reaction tRNA(Leu) + L-leucine + ATP = L-leucyl-tRNA(Leu) + AMP + diphosphate. The sequence is that of Leucine--tRNA ligase from Chloroherpeton thalassium (strain ATCC 35110 / GB-78).